Reading from the N-terminus, the 307-residue chain is Ornithine carbamoyltransferase (307 aa).

Carbamoyl phosphate contacts are provided by residues 53-56 (STRT), Q80, R104, and 131-134 (HPCQ). Residues N162, D220, and 224 to 225 (SM) each bind L-ornithine. Carbamoyl phosphate contacts are provided by residues 260–261 (CL) and R288.

It belongs to the aspartate/ornithine carbamoyltransferase superfamily. OTCase family.

It is found in the cytoplasm. The catalysed reaction is carbamoyl phosphate + L-ornithine = L-citrulline + phosphate + H(+). It participates in amino-acid biosynthesis; L-arginine biosynthesis; L-arginine from L-ornithine and carbamoyl phosphate: step 1/3. Functionally, reversibly catalyzes the transfer of the carbamoyl group from carbamoyl phosphate (CP) to the N(epsilon) atom of ornithine (ORN) to produce L-citrulline. The protein is Ornithine carbamoyltransferase of Nitrosomonas eutropha (strain DSM 101675 / C91 / Nm57).